The primary structure comprises 140 residues: Dehydratase ustZ (140 aa).

The 96-residue stretch at 18 to 113 (PGISTEDYRN…GPDHEKFADT (96 aa)) folds into the EthD domain.

This sequence belongs to the tpcK family.

It carries out the reaction naphtopyrone YWA1 = norrubrofusarin + H2O + H(+). It functions in the pathway secondary metabolite biosynthesis. In terms of biological role, dehydratase; part of the gene cluster that mediates the biosynthesis of ustilaginoidins, dimeric gamma-naphthopyrones isolated from different fungal species. The first step in the biosynthesis of ustilaginoidins is the production of gamma-naphthopyrone precursor YWA1 by the non-reducing polyketide synthase ustP, via condensation of one acetyl-CoA starter unit with 6 malonyl-CoA units. YWA1 is then probably substrate of the ustZ to yield norrubrofusarin via a dehydration reaction. A key enzyme in the biosynthetic pathway is the laccase ustL, which catalyzes the oxidative dimerization of norrubrofusarin to ustilaginoidin A. It can produce the M- and P-atropisomers in varying amounts, depending on the reaction conditions. For the biosynthesis of 3-methylustilaginoid in derivatives such as chaetochromin A, a methylated derivative of YWA1 is required. The C-methylation is considered to be catalyzed by ustM, the phosphopantetheine attachment site of which indicates that it acts on the growing polyketide chain before release of the product. For the biosynthesis of chaetochromin A, it is assumed that saturation of the D2 double bond takes place before dimerization, and is probably catalyzed by an external reductase because no candidate gene was identified within the cluster. The sequence is that of Dehydratase ustZ from Ustilaginoidea virens (Rice false smut fungus).